The following is a 594-amino-acid chain: P-granule-associated novel protein 1 (594 aa).

The N-terminal stretch at 1–18 (MRSLLSFVLLALARIAIS) is a signal peptide. Over 19 to 513 (EETKSCIDIE…PEEEEVYRSG (495 aa)) the chain is Extracellular. LRR repeat units lie at residues 78–101 (GTELGRLTIRDSTVNVLPQDLFEN), 103–124 (FAKQVKLERCGLSTLQPNSFQS), 125–149 (LGGSAELLSLRENRIKKLEKGLFTG), 150–173 (LKSLKTLDLAMNKIQEIDVGAFEE), 175–197 (KKVEELLLNENDIRVLKTGTFDG), 198–221 (MKNLKKLTLQNCNLEIIQKGAFRG), 222–245 (LNSLEQLILSNNNLENIDWTIFSA), 246–269 (LKNLRVLDLGSNKISNVEMKSFPK), 271–290 (EKLVLNNNTIDSMKSIKLKD), 291–315 (LPSLVVALFDRNKIESIGDMDMFGL), 318–341 (SDRIETLSLARNNLSQISPKAFQH), 343–365 (PNLITLLLQYNQIEELSSHSPSQ), 374–397 (LKKLVTLQLSSNNLSVIRSDELPK), 399–419 (LSSLALDHNVISKIEARALEG), and 420–442 (MEIKRLYLHSNKLNYLYQGTFDS). The helical transmembrane segment at 514 to 534 (WITVAATILTIVTIVIMVIIA) threads the bilayer. Topologically, residues 535-594 (MLYFKDARYQFPLRGRRSDSDLHKLIENDPLNIASDSILVVPAMPKRNTGPKKTVRFQNF) are cytoplasmic.

Interacts with glh-1. Interacts (via LRR regions) with myrf-1 (via C-terminus); the interaction promotes the role of myrf-1 in the synaptic remodeling of DD GABAergic motor neurons at the cell membrane. Expressed in the germline and somatic cells. In terms of tissue distribution, expressed in the germline and somatic cells. Expressed at higher levels in germline cells relative to somatic cells. As to expression, expressed in germline cells. Highly expressed in the pharynx and at lower levels in the intestine, but not detected in other tissues. Other studies suggest a broader expression pattern in somatic tissues: from embryogenesis to adult stages, expressed strongly in body wall muscle, vulva, somatic gonad and pharynx, at lower levels in the nerve ring, hypodermis, and rectal epithelia, and very weakly in the intestine.

The protein resides in the cytoplasm. Its subcellular location is the apical cell membrane. Regulates diverse developmental processes including larval molting and gonad maturation. In terms of biological role, promotes the localization of myrf-1 and myrf-2 to the cell membrane. In association with myrf-1, promotes the synaptic remodeling of DD GABAergic motor neurons whereby new synapses form in the dorsal processes of DD neurons. The chain is P-granule-associated novel protein 1 from Caenorhabditis elegans.